Reading from the N-terminus, the 344-residue chain is Arginase 2, chloroplastic/mitochondrial (344 aa).

The N-terminal 26 residues, 1 to 26, are a transit peptide targeting the chloroplast and mitochondrion; it reads MWKIGQRGVPYFQRLIAAPFTTLRSL. Mn(2+) is bound by residues histidine 163, aspartate 187, histidine 189, and aspartate 191. Substrate-binding positions include 189–193, 197–199, and asparagine 228; these read HPDIY and EGN. Mn(2+)-binding residues include aspartate 272 and aspartate 274. Residue glutamate 315 participates in substrate binding.

It belongs to the arginase family. Mn(2+) is required as a cofactor. In terms of tissue distribution, expressed in vasculature of roots, root tips, leaves and cotyledons.

The protein resides in the mitochondrion. Its subcellular location is the plastid. It is found in the chloroplast. It carries out the reaction L-arginine + H2O = urea + L-ornithine. It catalyses the reaction agmatine + H2O = urea + putrescine. The protein operates within nitrogen metabolism; urea cycle; L-ornithine and urea from L-arginine: step 1/1. It participates in amine and polyamine biosynthesis; putrescine biosynthesis via agmatine pathway; putrescine from agmatine: step 1/1. Catalyzes the hydrolysis of L-arginine to urea and L-ornithine. The latter can be utilized in the urea cycle or as a precursor for the synthesis of both polyamines and proline. Possesses agmatinase activity. Catalyzes the formation of putrescine from agmatine. This is Arginase 2, chloroplastic/mitochondrial (ARGAH2) from Arabidopsis thaliana (Mouse-ear cress).